A 66-amino-acid chain; its full sequence is Xenoxin-3 (66 aa).

4 cysteine pairs are disulfide-bonded: C3-C24, C17-C37, C43-C58, and C59-C64.

As to expression, expressed by the skin dorsal glands.

It is found in the secreted. Its function is as follows. Lacks alpha-neurotoxic activity, has apparently no antibacterial activity, nor anti-coagulant potency. The chain is Xenoxin-3 from Xenopus laevis (African clawed frog).